Reading from the N-terminus, the 267-residue chain is Ribosomal RNA small subunit methyltransferase A (267 aa).

S-adenosyl-L-methionine-binding residues include Leu20, Gly45, Glu68, Asp91, and Asn113.

The protein belongs to the class I-like SAM-binding methyltransferase superfamily. rRNA adenine N(6)-methyltransferase family. RsmA subfamily.

Its subcellular location is the cytoplasm. The catalysed reaction is adenosine(1518)/adenosine(1519) in 16S rRNA + 4 S-adenosyl-L-methionine = N(6)-dimethyladenosine(1518)/N(6)-dimethyladenosine(1519) in 16S rRNA + 4 S-adenosyl-L-homocysteine + 4 H(+). In terms of biological role, specifically dimethylates two adjacent adenosines (A1518 and A1519) in the loop of a conserved hairpin near the 3'-end of 16S rRNA in the 30S particle. May play a critical role in biogenesis of 30S subunits. This is Ribosomal RNA small subunit methyltransferase A from Blochmanniella pennsylvanica (strain BPEN).